A 708-amino-acid polypeptide reads, in one-letter code: Elongation factor G (708 aa).

One can recognise a tr-type G domain in the interval 8–290; sequence KRYRNIGISA…AVIQYLPAPM (283 aa). Residues 17–24, 88–92, and 142–145 contribute to the GTP site; these read AHIDAGKT, DTPGH, and NKMD.

This sequence belongs to the TRAFAC class translation factor GTPase superfamily. Classic translation factor GTPase family. EF-G/EF-2 subfamily.

The protein resides in the cytoplasm. Its function is as follows. Catalyzes the GTP-dependent ribosomal translocation step during translation elongation. During this step, the ribosome changes from the pre-translocational (PRE) to the post-translocational (POST) state as the newly formed A-site-bound peptidyl-tRNA and P-site-bound deacylated tRNA move to the P and E sites, respectively. Catalyzes the coordinated movement of the two tRNA molecules, the mRNA and conformational changes in the ribosome. The chain is Elongation factor G from Psychrobacter cryohalolentis (strain ATCC BAA-1226 / DSM 17306 / VKM B-2378 / K5).